Here is a 284-residue protein sequence, read N- to C-terminus: Putative ribosome biogenesis protein C306.07c (284 aa).

The tract at residues 264 to 284 is disordered; the sequence is LKKSELRAQKRGSSGEGKGNK.

It belongs to the universal ribosomal protein uL1 family. Highly divergent. Component of the 90S pre-ribosomes.

It localises to the nucleus. The protein resides in the nucleolus. In terms of biological role, involved in rRNA-processing and ribosome biosynthesis. The polypeptide is Putative ribosome biogenesis protein C306.07c (Schizosaccharomyces pombe (strain 972 / ATCC 24843) (Fission yeast)).